A 147-amino-acid polypeptide reads, in one-letter code: Large ribosomal subunit protein bL9 (147 aa).

Belongs to the bacterial ribosomal protein bL9 family.

In terms of biological role, binds to the 23S rRNA. The polypeptide is Large ribosomal subunit protein bL9 (Campylobacter lari (strain RM2100 / D67 / ATCC BAA-1060)).